The primary structure comprises 63 residues: Large ribosomal subunit protein uL29 (63 aa).

The protein belongs to the universal ribosomal protein uL29 family.

The protein is Large ribosomal subunit protein uL29 of Shewanella pealeana (strain ATCC 700345 / ANG-SQ1).